A 2302-amino-acid polypeptide reads, in one-letter code: Phosphatidylinositol phosphatase PTPRQ (2302 aa).

Residues 1 to 18 (MMDFHFSFLFLLIGTSES) form the signal peptide. Topologically, residues 19–1908 (QVDVSSSFDG…GEGLSERTVE (1890 aa)) are extracellular. N-linked (GlcNAc...) asparagine glycosylation is present at N54. Fibronectin type-III domains lie at 60 to 155 (PPVF…TAES), 159 to 254 (KVVN…SSST), 310 to 398 (PPQN…PPDV), 401 to 501 (AVFD…PHND), 474 to 566 (GFYE…TVRT), 570 to 665 (VPSS…TPED), 670 to 759 (SPQD…TSET), 764 to 854 (APEN…TEED), 859 to 948 (PPQN…TPEG), 953 to 1053 (PPND…TDQD), 1058 to 1151 (PVGN…TEED), 1156 to 1243 (PPII…TDES), 1248 to 1341 (PPQN…TQES), 1345 to 1431 (AVRN…LPET), 1435 to 1539 (APTN…TLPG), 1544 to 1642 (PPEN…TLES), and 1647 to 1748 (PPNN…IKAP). N162, N169, N318, N354, and N389 each carry an N-linked (GlcNAc...) asparagine glycan. 2 N-linked (GlcNAc...) asparagine glycosylation sites follow: N733 and N746. Residues N904, N998, N1010, and N1040 are each glycosylated (N-linked (GlcNAc...) asparagine). N-linked (GlcNAc...) asparagine glycans are attached at residues N1251 and N1256. The N-linked (GlcNAc...) asparagine glycan is linked to N1805. Residues 1909–1929 (IILSVTLCILSIILLGTAIFA) traverse the membrane as a helical segment. Residues 1930–2302 (FVRIRQKQKE…VELEWEETTM (373 aa)) lie on the Cytoplasmic side of the membrane. The Tyrosine-protein phosphatase domain occupies 2006-2262 (FQEEFSELPK…IFLHQCILDL (257 aa)). Residue C2203 is the Phosphocysteine intermediate of the active site.

Belongs to the protein-tyrosine phosphatase family. Receptor class 2A subfamily. In terms of assembly, interacts with TPRN. TPRN, CLIC5 and PTPQR form concentric rings at the base of stereocilia and may form a complex.

It is found in the cell projection. The protein resides in the stereocilium. Its subcellular location is the apical cell membrane. The protein localises to the basal cell membrane. The catalysed reaction is a 1,2-diacyl-sn-glycero-3-phospho-(1D-myo-inositol-3,4,5-trisphosphate) + H2O = a 1,2-diacyl-sn-glycero-3-phospho-(1D-myo-inositol-4,5-bisphosphate) + phosphate. The enzyme catalyses a 1,2-diacyl-sn-glycero-3-phospho-(1D-myo-inositol-3,4,5-trisphosphate) + H2O = a 1,2-diacyl-sn-glycero-3-phospho-(1D-myo-inositol-3,4-bisphosphate) + phosphate. It catalyses the reaction a 1,2-diacyl-sn-glycero-3-phospho-(1D-myo-inositol-3,5-bisphosphate) + H2O = a 1,2-diacyl-sn-glycero-3-phospho-(1D-myo-inositol-5-phosphate) + phosphate. It carries out the reaction a 1,2-diacyl-sn-glycero-3-phospho-(1D-myo-inositol-3,5-bisphosphate) + H2O = a 1,2-diacyl-sn-glycero-3-phospho-(1D-myo-inositol-3-phosphate) + phosphate. The catalysed reaction is a 1,2-diacyl-sn-glycero-3-phospho-(1D-myo-inositol-4,5-bisphosphate) + H2O = a 1,2-diacyl-sn-glycero-3-phospho-(1D-myo-inositol 4-phosphate) + phosphate. In terms of biological role, dephosphorylates phosphatidylinositol phosphates, such as phosphatidylinositol 3,4,5-trisphosphate (PIP3) and phosphatidylinositol 3,5-diphosphates, with preference for PIP3. Phosphate can be hydrolyzed from the D3 and D5 positions in the inositol ring. Has low tyrosine-protein phosphatase activity in vitro; however, the relevance of such activity in vivo is unclear. Plays an important role in adipogenesis of mesenchymal stem cells (MSCs). Regulates the phosphorylation state of AKT1 by regulating the levels of PIP3 level in MSCs and preadipocyte cells. Required for hair bundle maturation, a process that enables hair cells to detect and transmit sound and balance signals effectively, therefore affecting auditory function. May act by regulating the level of phosphatidylinositol 4,5-bisphosphate (PIP2) level in the basal region of hair bundles. This Rattus norvegicus (Rat) protein is Phosphatidylinositol phosphatase PTPRQ (Ptprq).